Consider the following 274-residue polypeptide: Putative pyruvate, phosphate dikinase regulatory protein (274 aa).

149 to 156 is a binding site for ADP; it reads GVSRSSKT.

It belongs to the pyruvate, phosphate/water dikinase regulatory protein family. PDRP subfamily.

The enzyme catalyses N(tele)-phospho-L-histidyl/L-threonyl-[pyruvate, phosphate dikinase] + ADP = N(tele)-phospho-L-histidyl/O-phospho-L-threonyl-[pyruvate, phosphate dikinase] + AMP + H(+). It carries out the reaction N(tele)-phospho-L-histidyl/O-phospho-L-threonyl-[pyruvate, phosphate dikinase] + phosphate + H(+) = N(tele)-phospho-L-histidyl/L-threonyl-[pyruvate, phosphate dikinase] + diphosphate. Functionally, bifunctional serine/threonine kinase and phosphorylase involved in the regulation of the pyruvate, phosphate dikinase (PPDK) by catalyzing its phosphorylation/dephosphorylation. The polypeptide is Putative pyruvate, phosphate dikinase regulatory protein (Rhizorhabdus wittichii (strain DSM 6014 / CCUG 31198 / JCM 15750 / NBRC 105917 / EY 4224 / RW1) (Sphingomonas wittichii)).